Consider the following 159-residue polypeptide: Transcriptional repressor NrdR (159 aa).

A zinc finger spans residues cysteine 3–cysteine 34. Residues proline 49–glutamate 139 enclose the ATP-cone domain.

Belongs to the NrdR family. Requires Zn(2+) as cofactor.

Negatively regulates transcription of bacterial ribonucleotide reductase nrd genes and operons by binding to NrdR-boxes. This Burkholderia ambifaria (strain MC40-6) protein is Transcriptional repressor NrdR.